Here is a 374-residue protein sequence, read N- to C-terminus: (R)-phenyllactyl-CoA dehydratase beta subunit (374 aa).

Belongs to the FldB/FldC dehydratase alpha/beta subunit family. As to quaternary structure, part of the heterotrimeric phenyllactate dehydratase complex FldABC, composed of (R)-phenyllactate CoA-transferase (FldA) and a heterodimeric (R)-phenyllactyl-CoA dehydratase (FldB and FldC). The cofactor is [4Fe-4S] cluster. No flavin could be detected in the FldABC complex, and the addition of FAD, FMN or riboflavin to the dehydratase do not increase enzymatic activity. is required as a cofactor.

It catalyses the reaction (R)-3-phenyllactoyl-CoA = (E)-cinnamoyl-CoA + H2O. The enzyme catalyses (R)-3-(4-hydroxyphenyl)lactoyl-CoA = (E)-4-coumaroyl-CoA + H2O. It carries out the reaction (R)-3-(indol-3-yl)lactoyl-CoA = (E)-3-(indol-3-yl)acryloyl-CoA + H2O. Its pathway is amino-acid degradation; L-phenylalanine degradation. Functionally, component of the phenyllactate dehydratase complex FldABC that is involved in the fermentation of L-phenylalanine via a Stickland reaction. This complex catalyzes the reversible syn-dehydration of (R)-phenyllactate to (E)-cinnamate in two steps, a CoA-transfer from cinnamoyl-CoA to phenyllactate, catalyzed by FldA, followed by the dehydration of phenyllactyl-CoA to cinnamoyl-CoA, catalyzed by FldB and FldC. Requires the activator FldI to initiate catalysis. The protein is (R)-phenyllactyl-CoA dehydratase beta subunit of Clostridium sporogenes.